A 173-amino-acid polypeptide reads, in one-letter code: Crossover junction endodeoxyribonuclease RuvC (173 aa).

Residues Asp-8, Glu-67, and Asp-139 contribute to the active site. The Mg(2+) site is built by Asp-8, Glu-67, and Asp-139.

The protein belongs to the RuvC family. In terms of assembly, homodimer which binds Holliday junction (HJ) DNA. The HJ becomes 2-fold symmetrical on binding to RuvC with unstacked arms; it has a different conformation from HJ DNA in complex with RuvA. In the full resolvosome a probable DNA-RuvA(4)-RuvB(12)-RuvC(2) complex forms which resolves the HJ. The cofactor is Mg(2+).

The protein localises to the cytoplasm. It carries out the reaction Endonucleolytic cleavage at a junction such as a reciprocal single-stranded crossover between two homologous DNA duplexes (Holliday junction).. In terms of biological role, the RuvA-RuvB-RuvC complex processes Holliday junction (HJ) DNA during genetic recombination and DNA repair. Endonuclease that resolves HJ intermediates. Cleaves cruciform DNA by making single-stranded nicks across the HJ at symmetrical positions within the homologous arms, yielding a 5'-phosphate and a 3'-hydroxyl group; requires a central core of homology in the junction. The consensus cleavage sequence is 5'-(A/T)TT(C/G)-3'. Cleavage occurs on the 3'-side of the TT dinucleotide at the point of strand exchange. HJ branch migration catalyzed by RuvA-RuvB allows RuvC to scan DNA until it finds its consensus sequence, where it cleaves and resolves the cruciform DNA. The chain is Crossover junction endodeoxyribonuclease RuvC from Klebsiella pneumoniae subsp. pneumoniae (strain ATCC 700721 / MGH 78578).